A 174-amino-acid chain; its full sequence is Chorismate pyruvate-lyase (174 aa).

M36, R78, L116, and E157 together coordinate substrate.

This sequence belongs to the UbiC family. As to quaternary structure, monomer.

Its subcellular location is the cytoplasm. It carries out the reaction chorismate = 4-hydroxybenzoate + pyruvate. It functions in the pathway cofactor biosynthesis; ubiquinone biosynthesis. Removes the pyruvyl group from chorismate, with concomitant aromatization of the ring, to provide 4-hydroxybenzoate (4HB) for the ubiquinone pathway. This Serratia proteamaculans (strain 568) protein is Chorismate pyruvate-lyase.